Here is a 469-residue protein sequence, read N- to C-terminus: Glutamine synthetase (469 aa).

One can recognise a GS beta-grasp domain in the interval 13–97 (NEVKFVDLRF…IRCDILEPAT (85 aa)). In terms of domain architecture, GS catalytic spans 105–469 (PRSIAKRAEE…PLEFELYYSV (365 aa)). 2 residues coordinate Mg(2+): Glu-130 and Glu-132. Residue Glu-208 coordinates ATP. Residues Glu-213 and Glu-221 each contribute to the Mg(2+) site. L-glutamate-binding positions include 265–266 (NG) and Gly-266. Residue His-270 coordinates Mg(2+). ATP is bound by residues 272–274 (HQS) and Ser-274. L-glutamate-binding residues include Arg-322, Glu-328, and Arg-340. ATP is bound by residues Arg-340, Arg-345, and Lys-353. Position 358 (Glu-358) interacts with Mg(2+). Arg-360 lines the L-glutamate pocket. The residue at position 398 (Tyr-398) is an O-AMP-tyrosine.

Belongs to the glutamine synthetase family. Oligomer of 12 subunits arranged in the form of two hexameric ring. It depends on Mg(2+) as a cofactor.

It is found in the cytoplasm. It catalyses the reaction L-glutamate + NH4(+) + ATP = L-glutamine + ADP + phosphate + H(+). Its activity is regulated as follows. The activity of this enzyme could be controlled by adenylation under conditions of abundant glutamine. In terms of biological role, catalyzes the ATP-dependent biosynthesis of glutamine from glutamate and ammonia. The polypeptide is Glutamine synthetase (glnAv) (Vibrio cholerae serotype O1 (strain ATCC 39315 / El Tor Inaba N16961)).